A 184-amino-acid chain; its full sequence is UPF0398 protein BCB4264_A1614 (184 aa).

This sequence belongs to the UPF0398 family.

In Bacillus cereus (strain B4264), this protein is UPF0398 protein BCB4264_A1614.